A 262-amino-acid polypeptide reads, in one-letter code: Type III pantothenate kinase (262 aa).

Residue 12 to 19 (DIGNTSIA) coordinates ATP. Residues tyrosine 94 and 109 to 112 (GSDV) contribute to the substrate site. The active-site Proton acceptor is the aspartate 111. Residue aspartate 132 coordinates K(+). Position 135 (threonine 135) interacts with ATP. Substrate is bound at residue threonine 187.

This sequence belongs to the type III pantothenate kinase family. As to quaternary structure, homodimer. NH4(+) is required as a cofactor. Requires K(+) as cofactor.

It is found in the cytoplasm. The catalysed reaction is (R)-pantothenate + ATP = (R)-4'-phosphopantothenate + ADP + H(+). It participates in cofactor biosynthesis; coenzyme A biosynthesis; CoA from (R)-pantothenate: step 1/5. Catalyzes the phosphorylation of pantothenate (Pan), the first step in CoA biosynthesis. This Borrelia garinii subsp. bavariensis (strain ATCC BAA-2496 / DSM 23469 / PBi) (Borreliella bavariensis) protein is Type III pantothenate kinase.